Consider the following 194-residue polypeptide: Erythropoietin (194 aa).

Positions 1–27 are cleaved as a signal peptide; the sequence is MGARDCTPLLLLLLSFLLFPLGLPVLG. 2 cysteine pairs are disulfide-bonded: cysteine 34-cysteine 189 and cysteine 56-cysteine 60. Residue asparagine 51 is glycosylated (N-linked (GlcNAc...) asparagine). N-linked (GlcNAc...) asparagine glycosylation is found at asparagine 65 and asparagine 110.

This sequence belongs to the EPO/TPO family. In terms of tissue distribution, produced by kidney or liver of adult mammals and by liver of fetal or neonatal mammals.

The protein resides in the secreted. In terms of biological role, hormone involved in the regulation of erythrocyte proliferation and differentiation and the maintenance of a physiological level of circulating erythrocyte mass. Binds to EPOR leading to EPOR dimerization and JAK2 activation thereby activating specific downstream effectors, including STAT1 and STAT3. This Ovis aries (Sheep) protein is Erythropoietin (EPO).